The primary structure comprises 495 residues: Acyltransferase abl6 (495 aa).

Histidine 171 (proton acceptor) is an active-site residue.

The protein belongs to the plant acyltransferase family.

Acyltransferase; part of the gene cluster that mediates the biosynthesis of abscisic acid (ABA), a phytohormone that acts antagonistically toward salicylic acid (SA), jasmonic acid (JA) and ethylene (ETH) signaling, to impede plant defense responses. The first step of the pathway catalyzes the reaction from farnesyl diphosphate to alpha-ionylideneethane performed by the alpha-ionylideneethane synthase abl3 via a three-step reaction mechanism involving 2 neutral intermediates, beta-farnesene and allofarnesene. The cytochrome P450 monooxygenase abl1 might then be involved in the conversion of alpha-ionylideneethane to alpha-ionylideneacetic acid. Alpha-ionylideneacetic acid is further converted to abscisic acid in 2 steps involving the cytochrome P450 monooxygenase abl2 and the short-chain dehydrogenase/reductase abl4, via the intermediates 1'-deoxy-ABA or 1',4'-trans-diol-ABA, depending on the order of action of these 2 enzymes. Abl2 is responsible for the hydroxylation of carbon atom C-1' and abl4 might be involved in the oxidation of the C-4' carbon atom. The acyltransferase abl6 seems not essential for the biosynthesis of ABA, but it may acetylate ABA as part of the synthesis of another ABA-related molecule. The sequence is that of Acyltransferase abl6 from Leptosphaeria maculans (strain JN3 / isolate v23.1.3 / race Av1-4-5-6-7-8) (Blackleg fungus).